The chain runs to 402 residues: MAVQLKWPIIGVVIPCVLIAMVAYGSHYFVFRTNLSRTEQILYEVYVCIVWLSYYLAIVVDPGSPPKNFTPKAGEWRRWCKKCQNYKPERSHHCKTCNKCVLKMDHHCPWTYNCVGHNNLPHFLRFVFFLIVGMTYVLFQLGKQVLHYYDSSKLPSYLIDKKEMCAVIFLLPVTFFVFVSIIILFVRCMINLLFRGMTQIEVWEMERIGSQFHTERLWLQIRKNYFKLHGKEMPHLVSWNRTTRYYEVDENSNNDNSNENNIVPKDFTSDDIVFPYDLGVSSNMINACDYPWMWLLPWGGPRENGYHFQKNEFMEDDQLGLPWPPDGGHQEPMAPVDDDFDISDSELQDMPSLRRRLDPRNNMTRSEWMNDLGETLDDFGVDLDAEDIEHDDLVSKDEISNN.

Topologically, residues Met1 to Pro8 are cytoplasmic. The helical transmembrane segment at Ile9–Phe29 threads the bilayer. The Lumenal portion of the chain corresponds to Val30–Glu39. The helical transmembrane segment at Gln40–Val60 threads the bilayer. Residues Asp61–Arg125 are Cytoplasmic-facing. Residues Arg78–Phe128 form the DHHC domain. Residue Cys108 is the S-palmitoyl cysteine intermediate of the active site. The chain crosses the membrane as a helical span at residues Phe126–Leu146. Residues His147 to Cys165 are Lumenal-facing. Residues Ala166 to Val186 traverse the membrane as a helical segment. Over Arg187–Asn402 the chain is Cytoplasmic.

This sequence belongs to the DHHC palmitoyltransferase family. PFA4 subfamily.

The protein localises to the endoplasmic reticulum membrane. It catalyses the reaction L-cysteinyl-[protein] + hexadecanoyl-CoA = S-hexadecanoyl-L-cysteinyl-[protein] + CoA. Its function is as follows. Mediates the reversible addition of palmitate to target proteins, thereby regulating their membrane association and biological function. This chain is Palmitoyltransferase PFA4, found in Debaryomyces hansenii (strain ATCC 36239 / CBS 767 / BCRC 21394 / JCM 1990 / NBRC 0083 / IGC 2968) (Yeast).